The sequence spans 318 residues: Ribosomal RNA small subunit methyltransferase A (318 aa).

6 residues coordinate S-adenosyl-L-methionine: Asn40, Val42, Gly67, Glu88, Asp118, and Asn137. Residues 296–305 (ADRGGSDREG) are compositionally biased toward basic and acidic residues. The segment at 296–318 (ADRGGSDREGTSPPTAGQGAPAC) is disordered.

This sequence belongs to the class I-like SAM-binding methyltransferase superfamily. rRNA adenine N(6)-methyltransferase family. RsmA subfamily.

It localises to the cytoplasm. It catalyses the reaction adenosine(1518)/adenosine(1519) in 16S rRNA + 4 S-adenosyl-L-methionine = N(6)-dimethyladenosine(1518)/N(6)-dimethyladenosine(1519) in 16S rRNA + 4 S-adenosyl-L-homocysteine + 4 H(+). Specifically dimethylates two adjacent adenosines (A1518 and A1519) in the loop of a conserved hairpin near the 3'-end of 16S rRNA in the 30S particle. May play a critical role in biogenesis of 30S subunits. The chain is Ribosomal RNA small subunit methyltransferase A from Mycobacterium avium (strain 104).